Here is a 188-residue protein sequence, read N- to C-terminus: Probable nicotinate-nucleotide adenylyltransferase (188 aa).

It belongs to the NadD family.

It catalyses the reaction nicotinate beta-D-ribonucleotide + ATP + H(+) = deamido-NAD(+) + diphosphate. It participates in cofactor biosynthesis; NAD(+) biosynthesis; deamido-NAD(+) from nicotinate D-ribonucleotide: step 1/1. Catalyzes the reversible adenylation of nicotinate mononucleotide (NaMN) to nicotinic acid adenine dinucleotide (NaAD). This is Probable nicotinate-nucleotide adenylyltransferase from Salinispora arenicola (strain CNS-205).